We begin with the raw amino-acid sequence, 271 residues long: Norsolorinic acid ketoreductase (271 aa).

A disordered region spans residues 1 to 22 (MNGSLSQHDQERLSTPYRDGPP). The NADP(+) site is built by Ile-36, Asn-112, Tyr-185, Lys-189, Val-216, and Thr-218. The active-site Proton donor is Tyr-185. The active-site Lowers pKa of active site Tyr is the Lys-189.

Belongs to the short-chain dehydrogenases/reductases (SDR) family.

It localises to the cytoplasm. The protein localises to the cytosol. The protein resides in the vacuole. It carries out the reaction (1'S)-averantin + NADP(+) = norsolorinic acid + NADPH + H(+). Its pathway is mycotoxin biosynthesis; aflatoxin biosynthesis. Its function is as follows. Norsolorinic acid ketoreductase; part of the gene cluster that mediates the biosynthesis of aflatoxins, a group of polyketide-derived furanocoumarins, and part of the most toxic and carcinogenic compounds among the known mycotoxins. The four major aflatoxins produced by A.parasiticus are aflatoxin B1 (AFB1), aflatoxin B2 (AFB2), aflatoxin G1 (AFG1) and aflatoxin G2 (AFG2). Within the aflatoxin pathway, the norsolorinic acid ketoreductase aflD performs the second step by catalyzing the dehydration of norsolorinic acid (NOR) to form (1'S)-averantin (AVN). The biosynthesis of aflatoxins begins with the norsolorinic acid synthase aflC that combines a hexanoyl starter unit produced by the fatty acid synthase aflA/aflB and 7 malonyl-CoA extender units to synthesize the precursor NOR. The second step is the conversion of NOR to averantin and requires the norsolorinic acid ketoreductase aflD, which catalyzes the dehydration of norsolorinic acid to form (1'S)-averantin. The norsolorinic acid reductases aflE and aflF may also play a role in the conversion of NOR to AVN. The cytochrome P450 monooxygenase aflG then catalyzes the hydroxylation of AVN to 5'hydroxyaverantin (HAVN). The next step is performed by the 5'-hydroxyaverantin dehydrogenase aflH that transforms HAVN to 5'-oxoaverantin (OAVN) which is further converted to averufin (AVF) by aflK that plays a dual role in the pathway, as a 5'-oxoaverantin cyclase that mediates conversion of 5'-oxoaverantin, as well as a versicolorin B synthase in a later step in the pathway. The averufin oxidase aflI catalyzes the conversion of AVF to versiconal hemiacetal acetate (VHA). VHA is then the substrate for the versiconal hemiacetal acetate esterase aflJ to yield versiconal (VAL). Versicolorin B synthase aflK then converts VAL to versicolorin B (VERB) by closing the bisfuran ring of aflatoxin which is required for DNA-binding, thus giving to aflatoxin its activity as a mutagen. Then, the activity of the versicolorin B desaturase aflL leads to versicolorin A (VERA). A branch point starts from VERB since it can also be converted to dihydrodemethylsterigmatocystin (DMDHST), probably also by aflL, VERA being a precursor for aflatoxins B1 and G1, and DMDHST for aflatoxins B2 and G2. Next, the versicolorin reductase aflM and the cytochrome P450 monooxygenase aflN are involved in conversion of VERA to demethylsterigmatocystin (DMST). AflX and aflY seem also involved in this step, through probable aflX-mediated epoxide ring-opening step following versicolorin A oxidation and aflY-mediated Baeyer-Villiger oxidation required for the formation of the xanthone ring. The methyltransferase aflO then leads to the modification of DMST to sterigmatocystin (ST), and of DMDHST to dihydrosterigmatocystin (DHST). Both ST and DHST are then substrates of the O-methyltransferase aflP to yield O-methylsterigmatocystin (OMST) and dihydro-O-methylsterigmatocystin (DHOMST), respectively. Finally OMST is converted to aflatoxins B1 and G1, and DHOMST to aflatoxins B2 and G2, via the action of several enzymes including O-methylsterigmatocystin oxidoreductase aflQ, the cytochrome P450 monooxygenase aflU, but also the NADH-dependent flavin oxidoreductase nadA which is specifically required for the synthesis of AFG1. In Aspergillus parasiticus (strain ATCC 56775 / NRRL 5862 / SRRC 143 / SU-1), this protein is Norsolorinic acid ketoreductase.